Reading from the N-terminus, the 349-residue chain is Probable dual-specificity RNA methyltransferase RlmN (349 aa).

Glutamate 94 functions as the Proton acceptor in the catalytic mechanism. One can recognise a Radical SAM core domain in the interval 100–324 (YKTHTSICLS…NKNNVNTTIR (225 aa)). Cysteines 107 and 335 form a disulfide. Positions 114, 118, and 121 each coordinate [4Fe-4S] cluster. S-adenosyl-L-methionine-binding positions include 161-162 (GE), serine 193, 216-218 (SLH), and asparagine 292. Cysteine 335 functions as the S-methylcysteine intermediate in the catalytic mechanism.

This sequence belongs to the radical SAM superfamily. RlmN family. [4Fe-4S] cluster is required as a cofactor.

The protein localises to the cytoplasm. The enzyme catalyses adenosine(2503) in 23S rRNA + 2 reduced [2Fe-2S]-[ferredoxin] + 2 S-adenosyl-L-methionine = 2-methyladenosine(2503) in 23S rRNA + 5'-deoxyadenosine + L-methionine + 2 oxidized [2Fe-2S]-[ferredoxin] + S-adenosyl-L-homocysteine. It catalyses the reaction adenosine(37) in tRNA + 2 reduced [2Fe-2S]-[ferredoxin] + 2 S-adenosyl-L-methionine = 2-methyladenosine(37) in tRNA + 5'-deoxyadenosine + L-methionine + 2 oxidized [2Fe-2S]-[ferredoxin] + S-adenosyl-L-homocysteine. In terms of biological role, specifically methylates position 2 of adenine 2503 in 23S rRNA and position 2 of adenine 37 in tRNAs. In Finegoldia magna (strain ATCC 29328 / DSM 20472 / WAL 2508) (Peptostreptococcus magnus), this protein is Probable dual-specificity RNA methyltransferase RlmN.